The chain runs to 234 residues: Leucyl/phenylalanyl-tRNA--protein transferase (234 aa).

This sequence belongs to the L/F-transferase family.

It is found in the cytoplasm. It catalyses the reaction N-terminal L-lysyl-[protein] + L-leucyl-tRNA(Leu) = N-terminal L-leucyl-L-lysyl-[protein] + tRNA(Leu) + H(+). It carries out the reaction N-terminal L-arginyl-[protein] + L-leucyl-tRNA(Leu) = N-terminal L-leucyl-L-arginyl-[protein] + tRNA(Leu) + H(+). The catalysed reaction is L-phenylalanyl-tRNA(Phe) + an N-terminal L-alpha-aminoacyl-[protein] = an N-terminal L-phenylalanyl-L-alpha-aminoacyl-[protein] + tRNA(Phe). Functions in the N-end rule pathway of protein degradation where it conjugates Leu, Phe and, less efficiently, Met from aminoacyl-tRNAs to the N-termini of proteins containing an N-terminal arginine or lysine. The chain is Leucyl/phenylalanyl-tRNA--protein transferase from Hahella chejuensis (strain KCTC 2396).